A 150-amino-acid chain; its full sequence is Large ribosomal subunit protein uL15 (150 aa).

The segment at 1–57 is disordered; it reads MRLEDIRPQAGSTRRRRRLGRGVSAGQGASCGKGMRGQKARKGGSTRPGFEGGQTPL. The segment covering 23-35 has biased composition (gly residues); that stretch reads VSAGQGASCGKGM.

It belongs to the universal ribosomal protein uL15 family. Part of the 50S ribosomal subunit.

In terms of biological role, binds to the 23S rRNA. This is Large ribosomal subunit protein uL15 from Synechococcus sp. (strain JA-2-3B'a(2-13)) (Cyanobacteria bacterium Yellowstone B-Prime).